We begin with the raw amino-acid sequence, 380 residues long: tRNA-specific 2-thiouridylase MnmA (380 aa).

Residues 26-33 (AMSGGVDS) and L52 contribute to the ATP site. Catalysis depends on C120, which acts as the Nucleophile. A disulfide bridge connects residues C120 and C217. G144 serves as a coordination point for ATP. Positions 166-168 (RDQ) are interaction with tRNA. The active-site Cysteine persulfide intermediate is C217.

It belongs to the MnmA/TRMU family.

It localises to the cytoplasm. It carries out the reaction S-sulfanyl-L-cysteinyl-[protein] + uridine(34) in tRNA + AH2 + ATP = 2-thiouridine(34) in tRNA + L-cysteinyl-[protein] + A + AMP + diphosphate + H(+). Its function is as follows. Catalyzes the 2-thiolation of uridine at the wobble position (U34) of tRNA, leading to the formation of s(2)U34. This chain is tRNA-specific 2-thiouridylase MnmA, found in Roseobacter denitrificans (strain ATCC 33942 / OCh 114) (Erythrobacter sp. (strain OCh 114)).